Consider the following 397-residue polypeptide: Phosphoglycerate kinase (397 aa).

Residues 21-23 (DVN), R36, 59-62 (HFGR), R119, and R152 each bind substrate. ATP is bound by residues K202, E324, and 354–357 (GGDT).

Belongs to the phosphoglycerate kinase family. In terms of assembly, monomer.

The protein localises to the cytoplasm. The catalysed reaction is (2R)-3-phosphoglycerate + ATP = (2R)-3-phospho-glyceroyl phosphate + ADP. It functions in the pathway carbohydrate degradation; glycolysis; pyruvate from D-glyceraldehyde 3-phosphate: step 2/5. This is Phosphoglycerate kinase from Cereibacter sphaeroides (strain KD131 / KCTC 12085) (Rhodobacter sphaeroides).